The chain runs to 448 residues: MSASAVNVTPGRNVVVVGTQWGDEGKGKIVDWLTDHAQGVVRFQGGHNAGHTLIIGGKKTILRLIPSGIMREGVACYIGNGVVLSPEALFKEIGELEEAGVNVRDRLFISEATTLILPYHIAIDQAREARKGAGKIGTTGRGIGPAYEDKVGRRALRVQDLFDAKTFADRLRENLDFHNFVLTQYLGGAAVDFQATLDTMLGYADRLKPMVADVSRRLYDANNAGQNLLFEGAQGTLLDIDHGTYPFVTSSNCVAGAASAGAGVGPQKLNYILGITKAYCTRVGSGPFPSELYDADNPQRQDQVGVTLANVGKEFGSVTGRPRRTGWLDAAALRRSIQINGVSGLCMTKLDVLDGLDEVKLCVGYKIDGKDADILPRGAADVARCEPVYETFAGWKESTVGIKTWEALPANAQAYLTRVQEVAGVPVDMVSTGPDRDETILLRHPFKV.

Residues 22–28 and 50–52 contribute to the GTP site; these read GDEGKGK and GHT. The active-site Proton acceptor is the D23. D23 and G50 together coordinate Mg(2+). IMP-binding positions include 23 to 26, 48 to 51, T139, R153, Q234, T249, and R321; these read DEGK and NAGH. Catalysis depends on H51, which acts as the Proton donor. 317–323 serves as a coordination point for substrate; it reads SVTGRPR. Residues R323, 349 to 351, and 431 to 433 each bind GTP; these read KLD and STG.

It belongs to the adenylosuccinate synthetase family. In terms of assembly, homodimer. The cofactor is Mg(2+).

The protein resides in the cytoplasm. It carries out the reaction IMP + L-aspartate + GTP = N(6)-(1,2-dicarboxyethyl)-AMP + GDP + phosphate + 2 H(+). It participates in purine metabolism; AMP biosynthesis via de novo pathway; AMP from IMP: step 1/2. Its function is as follows. Plays an important role in the de novo pathway of purine nucleotide biosynthesis. Catalyzes the first committed step in the biosynthesis of AMP from IMP. The polypeptide is Adenylosuccinate synthetase 1 (Burkholderia lata (strain ATCC 17760 / DSM 23089 / LMG 22485 / NCIMB 9086 / R18194 / 383)).